The primary structure comprises 454 residues: tRNA modification GTPase MnmE (454 aa).

Residues R26, E84, and K123 each coordinate (6S)-5-formyl-5,6,7,8-tetrahydrofolate. The 160-residue stretch at 219-378 (GLQVVIAGKP…LVDAITAHAG (160 aa)) folds into the TrmE-type G domain. Position 229 (N229) interacts with K(+). Residues 229 to 234 (NAGKSS), 248 to 254 (TDIAGTT), and 273 to 276 (DTAG) each bind GTP. Mg(2+) is bound at residue S233. 3 residues coordinate K(+): T248, I250, and T253. T254 is a binding site for Mg(2+). Position 454 (K454) interacts with (6S)-5-formyl-5,6,7,8-tetrahydrofolate.

It belongs to the TRAFAC class TrmE-Era-EngA-EngB-Septin-like GTPase superfamily. TrmE GTPase family. Homodimer. Heterotetramer of two MnmE and two MnmG subunits. K(+) is required as a cofactor.

The protein resides in the cytoplasm. Functionally, exhibits a very high intrinsic GTPase hydrolysis rate. Involved in the addition of a carboxymethylaminomethyl (cmnm) group at the wobble position (U34) of certain tRNAs, forming tRNA-cmnm(5)s(2)U34. The protein is tRNA modification GTPase MnmE of Acinetobacter baumannii (strain AYE).